The chain runs to 486 residues: mRNA cap guanine-N(7) methyltransferase (486 aa).

The tract at residues Met1 to Ala92 is disordered. Composition is skewed to basic and acidic residues over residues Glu9–His28, Val35–Arg54, and Glu82–Ala92. The mRNA cap 0 methyltransferase domain maps to Ser135–Val486. Position 144–145 (Asn144–Asn145) interacts with mRNA. Residues Lys148, Gly177, Asp201, Asp247, Met281–Cys283, and Tyr286 contribute to the S-adenosyl-L-methionine site. Positions Val333–Gly351 are enriched in basic and acidic residues. Residues Val333–Glu365 form a disordered region. Positions Gly352–Glu363 are enriched in acidic residues.

The protein belongs to the class I-like SAM-binding methyltransferase superfamily. mRNA cap 0 methyltransferase family.

It localises to the nucleus. The catalysed reaction is a 5'-end (5'-triphosphoguanosine)-ribonucleoside in mRNA + S-adenosyl-L-methionine = a 5'-end (N(7)-methyl 5'-triphosphoguanosine)-ribonucleoside in mRNA + S-adenosyl-L-homocysteine. Functionally, responsible for methylating the 5'-cap structure of mRNAs. The sequence is that of mRNA cap guanine-N(7) methyltransferase (ABD1) from Pyricularia oryzae (strain 70-15 / ATCC MYA-4617 / FGSC 8958) (Rice blast fungus).